A 165-amino-acid polypeptide reads, in one-letter code: Large ribosomal subunit protein uL10 (165 aa).

This sequence belongs to the universal ribosomal protein uL10 family. As to quaternary structure, part of the ribosomal stalk of the 50S ribosomal subunit. The N-terminus interacts with L11 and the large rRNA to form the base of the stalk. The C-terminus forms an elongated spine to which L12 dimers bind in a sequential fashion forming a multimeric L10(L12)X complex.

Functionally, forms part of the ribosomal stalk, playing a central role in the interaction of the ribosome with GTP-bound translation factors. This Halalkalibacterium halodurans (strain ATCC BAA-125 / DSM 18197 / FERM 7344 / JCM 9153 / C-125) (Bacillus halodurans) protein is Large ribosomal subunit protein uL10 (rplJ).